Here is a 342-residue protein sequence, read N- to C-terminus: Dihydroorotate dehydrogenase (quinone) (342 aa).

FMN is bound by residues 60 to 64 and T84; that span reads AGFDK. K64 is a substrate binding site. Position 109–113 (109–113) interacts with substrate; sequence NRMGF. Positions 137 and 170 each coordinate FMN. Substrate is bound at residue N170. The Nucleophile role is filled by S173. N175 lines the substrate pocket. Residues K215 and T243 each contribute to the FMN site. Position 244–245 (244–245) interacts with substrate; it reads NT. Residues G266, G295, and 316-317 contribute to the FMN site; that span reads YT.

This sequence belongs to the dihydroorotate dehydrogenase family. Type 2 subfamily. Monomer. FMN is required as a cofactor.

It is found in the cell membrane. The enzyme catalyses (S)-dihydroorotate + a quinone = orotate + a quinol. Its pathway is pyrimidine metabolism; UMP biosynthesis via de novo pathway; orotate from (S)-dihydroorotate (quinone route): step 1/1. Catalyzes the conversion of dihydroorotate to orotate with quinone as electron acceptor. The protein is Dihydroorotate dehydrogenase (quinone) of Halorhodospira halophila (strain DSM 244 / SL1) (Ectothiorhodospira halophila (strain DSM 244 / SL1)).